A 306-amino-acid polypeptide reads, in one-letter code: Ornithine carbamoyltransferase (306 aa).

Residues 51 to 54 (STRT), Gln-78, Arg-102, and 129 to 132 (HPCQ) contribute to the carbamoyl phosphate site. L-ornithine-binding positions include Asn-160, Asp-223, and 227–228 (SM). Residues 263–264 (CL) and Arg-291 contribute to the carbamoyl phosphate site.

It belongs to the aspartate/ornithine carbamoyltransferase superfamily. OTCase family.

The protein localises to the cytoplasm. It catalyses the reaction carbamoyl phosphate + L-ornithine = L-citrulline + phosphate + H(+). It participates in amino-acid biosynthesis; L-arginine biosynthesis; L-arginine from L-ornithine and carbamoyl phosphate: step 1/3. Functionally, reversibly catalyzes the transfer of the carbamoyl group from carbamoyl phosphate (CP) to the N(epsilon) atom of ornithine (ORN) to produce L-citrulline. In Trichormus variabilis (strain ATCC 29413 / PCC 7937) (Anabaena variabilis), this protein is Ornithine carbamoyltransferase.